A 584-amino-acid chain; its full sequence is POTE ankyrin domain family member D (584 aa).

ANK repeat units follow at residues 172-201, 205-234, 238-267, 271-300, 304-333, and 337-366; these read EKRT…QLNV, KKRT…DRNI, YGNT…DIES, CGLT…NLNV, YGRT…DVSS, and SGQT…KQML. The segment at 369–502 is disordered; that stretch reads SSENSNPEQD…ILTNKQKQIE (134 aa). Composition is skewed to basic and acidic residues over residues 377–392, 401–412, and 466–481; these read QDLK…RLKV, MSQEPEINKDCD, and EEYH…KQLS. The span at 482 to 498 shows a compositional bias: polar residues; sequence EEQNTGISQDEILTNKQ. A coiled-coil region spans residues 494–583; sequence LTNKQKQIEV…LNEEALTKTN (90 aa).

The protein belongs to the POTE family. Expressed in prostate, ovary, testis, placenta and prostate cancer cell lines. Localizes to basal and terminal prostate epithelial cells.

The protein resides in the cell membrane. This is POTE ankyrin domain family member D (POTED) from Homo sapiens (Human).